Consider the following 176-residue polypeptide: NAD(P)H-quinone oxidoreductase subunit 6, chloroplastic (176 aa).

5 helical membrane passes run F10–P30, P32–L52, A61–M81, L92–I112, and F152–A172.

Belongs to the complex I subunit 6 family. In terms of assembly, NDH is composed of at least 16 different subunits, 5 of which are encoded in the nucleus.

It is found in the plastid. The protein resides in the chloroplast thylakoid membrane. It carries out the reaction a plastoquinone + NADH + (n+1) H(+)(in) = a plastoquinol + NAD(+) + n H(+)(out). The enzyme catalyses a plastoquinone + NADPH + (n+1) H(+)(in) = a plastoquinol + NADP(+) + n H(+)(out). Functionally, NDH shuttles electrons from NAD(P)H:plastoquinone, via FMN and iron-sulfur (Fe-S) centers, to quinones in the photosynthetic chain and possibly in a chloroplast respiratory chain. The immediate electron acceptor for the enzyme in this species is believed to be plastoquinone. Couples the redox reaction to proton translocation, and thus conserves the redox energy in a proton gradient. The chain is NAD(P)H-quinone oxidoreductase subunit 6, chloroplastic (ndhG) from Solanum tuberosum (Potato).